A 281-amino-acid polypeptide reads, in one-letter code: MVEFVEINGAQLAYRICGPEDAPLVITLHGGRGMGNHQSDFKAFSPLGDSYRILSFDYRGHGQSSRTKPYTFEQIVDDIDGMRARFAGPEKQVIILGGSFGGFLAQQYAIKYASHVSHLILRGTAPSHHHEEGAIKTLEQRLSKVPSFSIEMLKDKVFGAFDSDLEFRMVHLVMSPLYSESFDANAALQSCLNNVYNAESHNDLYSEKEKYFDYTKDLHRITAKTLVVVGDKDWICPPENSKFIAKEIKDAELFLVENANHSVHVEKNDLVVKKIRSHLEK.

Residues 23-267 form the AB hydrolase-1 domain; the sequence is PLVITLHGGR…NANHSVHVEK (245 aa).

Belongs to the peptidase S33 family.

It carries out the reaction Release of N-terminal proline from a peptide.. Its function is as follows. Proline iminopeptidase; part of the gene cluster that mediates the biosynthesis of dihydroxynaphthalene (DHN)-melanin, a bluish-green pigment forming a dark layer in the conidial wall that protects the conidia from UV radiations. The first step of the pathway is the production of the pentaketide 1,3,6,8-tetrahydroxynaphthalene (1,3,6,8-THN or T4HN) by the polyketide synthase PfmaE though condensation of acetyl-CoA with malonyl-CoA. T4HN is not stable and easily oxidizes into the stable form flaviolin. T4HN is also substrate of the hydroxynaphthalene reductase PfmaG to yield scytalone. The scytalone dehydratase PfmaJ then reduces scytalone to 1,3,8-THN. 1,3,8-THN is then substrate of the hydroxynaphthalene reductase PfmaI to yield vermelone. Vermelone is further converted by the multicopper oxidase PfmaD to 1,8-DHN. Finally the laccase PFICI_06862 transforms 1,8-DHN to DHN-melanin. The roles of the 5-oxoprolinase PfmaA and the proline iminopeptidase PfmaB within the cluster have not been elucidated yet. This Pestalotiopsis fici (strain W106-1 / CGMCC3.15140) protein is Proline iminopeptidase PfmaB.